The chain runs to 342 residues: Farnesyl pyrophosphate synthase 1 (342 aa).

Isopentenyl diphosphate is bound by residues lysine 47, arginine 50, and glutamine 86. Mg(2+) is bound by residues aspartate 93 and aspartate 97. Arginine 102 is a binding site for dimethylallyl diphosphate. Isopentenyl diphosphate is bound at residue arginine 103. Residues lysine 190, threonine 191, glutamine 229, lysine 246, and lysine 255 each coordinate dimethylallyl diphosphate.

Belongs to the FPP/GGPP synthase family. Mg(2+) is required as a cofactor.

The protein localises to the cytoplasm. The enzyme catalyses isopentenyl diphosphate + dimethylallyl diphosphate = (2E)-geranyl diphosphate + diphosphate. The catalysed reaction is isopentenyl diphosphate + (2E)-geranyl diphosphate = (2E,6E)-farnesyl diphosphate + diphosphate. The protein operates within isoprenoid biosynthesis; farnesyl diphosphate biosynthesis; farnesyl diphosphate from geranyl diphosphate and isopentenyl diphosphate: step 1/1. Its pathway is isoprenoid biosynthesis; geranyl diphosphate biosynthesis; geranyl diphosphate from dimethylallyl diphosphate and isopentenyl diphosphate: step 1/1. Its function is as follows. Catalyzes the sequential condensation of isopentenyl pyrophosphate with the allylic pyrophosphates, dimethylallyl pyrophosphate, and then with the resultant geranylpyrophosphate to the ultimate product farnesyl pyrophosphate. In Lupinus albus (White lupine), this protein is Farnesyl pyrophosphate synthase 1 (FPS1).